Reading from the N-terminus, the 402-residue chain is Putative F-box protein At3g23960 (402 aa).

Residues 1–23 (MRSRQLHNVSEDRETLSRRNKRS) form a disordered region. Positions 26–73 (SLNGHIPIDLLIEIFLKLPVKSIATCRSVSKFWTYVLGRQDFTELFLT) constitute an F-box domain.

The chain is Putative F-box protein At3g23960 from Arabidopsis thaliana (Mouse-ear cress).